The following is a 245-amino-acid chain: MKNVGDLMQRLQKMMPAHIKPAFKTGEELLAWQKEQGAIRSAALERENRAMKMQRTFNRSGIRPLHQNCSFENYRVECEGQMNALSKARQYVEEFDGNIASFIFSGKPGTGKNHLAAAICNELLLRGKSVLIITVADIMSAMKDTFRNSGTSEEQLLNDLSNVDLLVIDEIGVQTESKYEKVIINQIVDRRSSSKRPTGMLTNSNMEEMTKLLGERVMDRMRLGNSLWVIFNWDSYRSRVTGKEY.

The protein belongs to the DnaC family. The helix loader is a DnaB(6):DnaC(6) complex with a crack opening large enough to allow ssDNA into the central cavity.

It catalyses the reaction ATP + H2O = ADP + phosphate + H(+). Its function is as follows. Required to load the replicative helix DnaB onto single-stranded (ss)DNA, to initiate chromosomal replication. DnaC alters the inter-domain and inter-subunit interactions of DnaB, inducing an open ring conformation that allows ssDNA to access the interior of the DnaB(6):DnaC(6) ring. Has ATPase activity only in the presence of DnaB and ssDNA. ssDNA binds to the central pore in the DnaB(6):DnaC(6) complex, making contacts with both subunits. It forms, in concert with DnaB protein and other prepriming proteins DnaT, N, N', N'' a prepriming protein complex on the specific site of the template DNA recognized by protein N'. This chain is Replicative helicase loader DnaC (dnaC), found in Escherichia coli O157:H7.